Here is a 391-residue protein sequence, read N- to C-terminus: DNA-directed RNA polymerase I subunit RPA43 (391 aa).

Disordered regions lie at residues M1 to S27 and Q220 to K391. Residues G288–R299 show a composition bias toward basic residues. The stretch at R289–I353 forms a coiled coil. The segment covering M312–D323 has biased composition (polar residues). A compositionally biased stretch (basic residues) spans K336–D345.

Belongs to the eukaryotic RPA43 RNA polymerase subunit family. In terms of assembly, component of the RNA polymerase I (Pol I) complex consisting of at least 13 subunits.

Its subcellular location is the nucleus. The protein resides in the nucleolus. Its function is as follows. DNA-dependent RNA polymerase catalyzes the transcription of DNA into RNA using the four ribonucleoside triphosphates as substrates. Component of RNA polymerase I which synthesizes ribosomal RNA precursors. May be involved in recruitment of Pol I to rDNA promoters. The sequence is that of DNA-directed RNA polymerase I subunit RPA43 from Danio rerio (Zebrafish).